The primary structure comprises 308 residues: 1,4-dihydroxy-2-naphthoate octaprenyltransferase (308 aa).

Residues 1–20 are Cytoplasmic-facing; that stretch reads MTEQQISRTQAWLESLRPKT. Residues 21–41 traverse the membrane as a helical segment; that stretch reads LPLAFAAIIVGTALAWWQGHF. Residue Asp42 is a topological domain, periplasmic. A helical membrane pass occupies residues 43 to 63; sequence PLVALLALITAGLLQILSNLA. Residues 64 to 97 lie on the Cytoplasmic side of the membrane; it reads NDYGDAVKGSDKPDRIGPLRGMQKGVITQQEMKR. The chain crosses the membrane as a helical span at residues 98–118; the sequence is ALIITVVLICLSGLALVAVAC. Residues 119-123 lie on the Periplasmic side of the membrane; that stretch reads HTLAD. The helical transmembrane segment at 124 to 144 threads the bilayer; it reads FVGFLILGGLSIIAAITYTVG. Residues 145–148 lie on the Cytoplasmic side of the membrane; it reads NRPY. The chain crosses the membrane as a helical span at residues 149-169; it reads GYIGLGDISVLVFFGWLSVMG. Topologically, residues 170–176 are periplasmic; it reads SWYLQAH. Residues 177–197 traverse the membrane as a helical segment; the sequence is TLIPALILPATACGLLATAVL. Over 198–227 the chain is Cytoplasmic; sequence NINNLRDINSDRENGKNTLVVRLGEVNARR. A helical membrane pass occupies residues 228-247; sequence YHACLLMGSLVCLALFNLFS. At 248 to 250 the chain is on the periplasmic side; the sequence is LHS. Residues 251–270 traverse the membrane as a helical segment; it reads LWGWLFLLAAPLLVKQARYV. Residues 271–286 lie on the Cytoplasmic side of the membrane; sequence MREMDPVAMRPMLERT. The helical transmembrane segment at 287 to 307 threads the bilayer; the sequence is VKGALLTNLLFVLGIFLSQWA. Residue Ala308 is a topological domain, periplasmic.

The protein belongs to the MenA family. Type 1 subfamily.

The protein resides in the cell inner membrane. It carries out the reaction an all-trans-polyprenyl diphosphate + 1,4-dihydroxy-2-naphthoate + H(+) = a 2-demethylmenaquinol + CO2 + diphosphate. Its pathway is quinol/quinone metabolism; menaquinone biosynthesis; menaquinol from 1,4-dihydroxy-2-naphthoate: step 1/2. Conversion of 1,4-dihydroxy-2-naphthoate (DHNA) to demethylmenaquinone (DMK). Attaches octaprenylpyrophosphate, a membrane-bound 40-carbon side chain to DHNA. The conversion of DHNA to DMK proceeds in three stages: the removal of the carboxyl group of DHNA as CO(2), the attachment of the isoprenoid side chain, and a quinol-to-quinone oxidation, which is thought to be spontaneous. The polypeptide is 1,4-dihydroxy-2-naphthoate octaprenyltransferase (Escherichia coli (strain K12)).